Consider the following 400-residue polypeptide: Deoxyguanosinetriphosphate triphosphohydrolase-like protein (400 aa).

An HD domain is found at Arg73–Asn215.

It belongs to the dGTPase family. Type 2 subfamily.

In Bartonella henselae (strain ATCC 49882 / DSM 28221 / CCUG 30454 / Houston 1) (Rochalimaea henselae), this protein is Deoxyguanosinetriphosphate triphosphohydrolase-like protein.